The primary structure comprises 485 residues: Aspartyl/glutamyl-tRNA(Asn/Gln) amidotransferase subunit B (485 aa).

This sequence belongs to the GatB/GatE family. GatB subfamily. In terms of assembly, heterotrimer of A, B and C subunits.

The catalysed reaction is L-glutamyl-tRNA(Gln) + L-glutamine + ATP + H2O = L-glutaminyl-tRNA(Gln) + L-glutamate + ADP + phosphate + H(+). It carries out the reaction L-aspartyl-tRNA(Asn) + L-glutamine + ATP + H2O = L-asparaginyl-tRNA(Asn) + L-glutamate + ADP + phosphate + 2 H(+). Allows the formation of correctly charged Asn-tRNA(Asn) or Gln-tRNA(Gln) through the transamidation of misacylated Asp-tRNA(Asn) or Glu-tRNA(Gln) in organisms which lack either or both of asparaginyl-tRNA or glutaminyl-tRNA synthetases. The reaction takes place in the presence of glutamine and ATP through an activated phospho-Asp-tRNA(Asn) or phospho-Glu-tRNA(Gln). This Borrelia hermsii (strain HS1 / DAH) protein is Aspartyl/glutamyl-tRNA(Asn/Gln) amidotransferase subunit B.